The following is a 594-amino-acid chain: Suppressor of hairless protein (594 aa).

Residues 20-87 form a disordered region; it reads ETTVVNPNGS…QQQQQHQQQM (68 aa). Positions 58–87 are enriched in low complexity; it reads QQQQQQLQVHHQQQQQQQQQQQQQQHQQQM. DNA-binding stretches follow at residues 131–141, 239–244, and 266–271; these read QKSYGNEKRFF, SKPSKK, and RLRSQT. Residues 429 to 519 enclose the IPT/TIG domain; that stretch reads PIVNSLNLNG…YATGLTFTYT (91 aa). Composition is skewed to low complexity over residues 542–562 and 569–580; these read NNNNNITSISNNNNSNNAGSP and QQQQQQHQALPS. The tract at residues 542-594 is disordered; that stretch reads NNNNNITSISNNNNSNNAGSPAAGGGLQQQQQQHQALPSISEVQWNSHGSGLS. Residues 582–594 show a composition bias toward polar residues; sequence SEVQWNSHGSGLS.

Belongs to the Su(H) family. As to quaternary structure, interacts with activated cleaved Notch. Interacts with Hairless, this interaction preventing its DNA-binding activity. Interacts with insv (via BEN domain).

The protein resides in the nucleus. The protein localises to the cytoplasm. Transcriptional regulator that plays a central role in Notch signaling, a signaling pathway involved in cell-cell communication that regulates a broad spectrum of cell-fate determinations. Binds directly the 5'-GTGRGAR-3' DNA consensus sequence, which is present in the regulatory region of several genes. Acts as a transcriptional repressor when it is not associated with Notch proteins. When associated with some Notch protein, it acts as a transcriptional activator that activates transcription of Notch target genes. Required for transcription of Sim. Specifically binds to the immunoglobulin kappa-type J segment recombination signal sequence. Required for neurogenesis in imaginal disks. In the larval brain, might play a role as a transducer of Notch signaling during type II neuroblast development. Also functions independently of the Notch pathway, in the development of the bristle sensory organ precursor cell. This Drosophila melanogaster (Fruit fly) protein is Suppressor of hairless protein (Su(H)).